A 342-amino-acid polypeptide reads, in one-letter code: MYTLARQLLFKLSPETSHELSIDLIGAGGRLGLNRLLAPRPASLPVSVLGLEFPNPVGLAAGLDKNGDAIDGFGQLGFGFIEIGTVTPRPQPGNPKPRLFRLPQASAIINRMGFNNHGVDHLLARVRAAKYRGVLGINIGKNFDTPVERAVDDYLTCLDKVYADASYVTVNVSSPNTPGLRSLQFGDSLKQLLEALRQRQEDLALRHGRRVPLAIKIAPDMSDEETALVAAALVEAGMDAVIATNTTLGREGVEGLPHGDEAGGLSGAPVREKSTHTVKVLAGELGGRLPIIAAGGITEGAHAAEKIAAGASLVQIYSGFIYKGPALIREAVDAIAALPRRN.

FMN contacts are provided by residues 61-65 (AGLDK) and threonine 85. Lysine 65 serves as a coordination point for substrate. Residue 110-114 (NRMGF) participates in substrate binding. Residues asparagine 138 and asparagine 171 each contribute to the FMN site. Asparagine 171 contributes to the substrate binding site. Residue serine 174 is the Nucleophile of the active site. Position 176 (asparagine 176) interacts with substrate. FMN-binding residues include lysine 216 and threonine 244. Residue 245–246 (NT) participates in substrate binding. FMN contacts are provided by residues glycine 267, glycine 296, and 317–318 (YS).

Belongs to the dihydroorotate dehydrogenase family. Type 2 subfamily. In terms of assembly, monomer. It depends on FMN as a cofactor.

The protein resides in the cell membrane. It catalyses the reaction (S)-dihydroorotate + a quinone = orotate + a quinol. It functions in the pathway pyrimidine metabolism; UMP biosynthesis via de novo pathway; orotate from (S)-dihydroorotate (quinone route): step 1/1. In terms of biological role, catalyzes the conversion of dihydroorotate to orotate with quinone as electron acceptor. This is Dihydroorotate dehydrogenase (quinone) from Pseudomonas paraeruginosa (strain DSM 24068 / PA7) (Pseudomonas aeruginosa (strain PA7)).